The following is a 257-amino-acid chain: Phosphate import ATP-binding protein PstB (257 aa).

An ABC transporter domain is found at 11–252 (IQVRNLNFYY…PAKKQTEDYI (242 aa)). 43 to 50 (GPSGCGKS) provides a ligand contact to ATP.

Belongs to the ABC transporter superfamily. Phosphate importer (TC 3.A.1.7) family. The complex is composed of two ATP-binding proteins (PstB), two transmembrane proteins (PstC and PstA) and a solute-binding protein (PstS).

The protein resides in the cell inner membrane. It carries out the reaction phosphate(out) + ATP + H2O = ADP + 2 phosphate(in) + H(+). Part of the ABC transporter complex PstSACB involved in phosphate import. Responsible for energy coupling to the transport system. This chain is Phosphate import ATP-binding protein PstB, found in Escherichia coli O6:K15:H31 (strain 536 / UPEC).